The sequence spans 1482 residues: Pregnancy zone protein (1482 aa).

The N-terminal stretch at 1-25 is a signal peptide; it reads MRKDRLLHLCLVLLLILLSASDSNS. N-linked (GlcNAc...) asparagine glycans are attached at residues asparagine 54, asparagine 69, asparagine 246, asparagine 392, and asparagine 406. The segment at 685–735 is bait region; the sequence is CSVIPSVSAGAVGQGYYGAGLGVVERPYVPQLGTYNVIPLNNEQSSGPVPE. Asparagine 753, asparagine 875, and asparagine 932 each carry an N-linked (GlcNAc...) asparagine glycan. Residues 978-981 constitute a cross-link (isoglutamyl cysteine thioester (Cys-Gln)); that stretch reads CGEQ. N-linked (GlcNAc...) asparagine glycans are attached at residues asparagine 997 and asparagine 1430.

The protein belongs to the protease inhibitor I39 (alpha-2-macroglobulin) family. Homotetramer, which consists of two pairs of disulfide-linked chains. In terms of tissue distribution, plasma. Prominent constituent of late-pregnancy sera.

The protein localises to the secreted. In terms of biological role, is able to inhibit all four classes of proteinases by a unique 'trapping' mechanism. This protein has a peptide stretch, called the 'bait region' which contains specific cleavage sites for different proteinases. When a proteinase cleaves the bait region, a conformational change is induced in the protein which traps the proteinase. The entrapped enzyme remains active against low molecular weight substrates (activity against high molecular weight substrates is greatly reduced). Following cleavage in the bait region a thioester bond is hydrolyzed and mediates the covalent binding of the protein to the proteinase. The sequence is that of Pregnancy zone protein (PZP) from Homo sapiens (Human).